A 100-amino-acid chain; its full sequence is Integration host factor subunit alpha 2 (100 aa).

It belongs to the bacterial histone-like protein family. Heterodimer of an alpha and a beta chain.

This protein is one of the two subunits of integration host factor, a specific DNA-binding protein that functions in genetic recombination as well as in transcriptional and translational control. This Dechloromonas aromatica (strain RCB) protein is Integration host factor subunit alpha 2.